We begin with the raw amino-acid sequence, 120 residues long: MNVLSGIGEFLVLFGTVFYFLSTLGLIRMPDVYNRMQTATKSVTLGSLSTIIGVGLWALGEGLSLAWLTKTIVIAVFLLLTNPISAHTLIRGAYKSGIPLWEGSVVDKYKEHLKEKEGAE.

It belongs to the UPF0091 family.

The protein is UPF0091 protein PH1455 of Pyrococcus horikoshii (strain ATCC 700860 / DSM 12428 / JCM 9974 / NBRC 100139 / OT-3).